The primary structure comprises 143 residues: uncharacterized protein (143 aa).

It is found in the mitochondrion. This is an uncharacterized protein from Arabidopsis thaliana (Mouse-ear cress).